A 128-amino-acid polypeptide reads, in one-letter code: Cytochrome c-type biogenesis protein CcmE (128 aa).

The Cytoplasmic portion of the chain corresponds to 1-8 (MQKRVRNR). Residues 9 to 29 (LITIIICFCSAFLGISIILYN) form a helical; Signal-anchor for type II membrane protein membrane-spanning segment. At 30–128 (LEKNIVFFLP…KHDENYRPPQ (99 aa)) the chain is on the periplasmic side. Positions 120 and 124 each coordinate heme.

The protein belongs to the CcmE/CycJ family.

It localises to the cell inner membrane. In terms of biological role, heme chaperone required for the biogenesis of c-type cytochromes. Transiently binds heme delivered by CcmC and transfers the heme to apo-cytochromes in a process facilitated by CcmF and CcmH. This chain is Cytochrome c-type biogenesis protein CcmE, found in Rickettsia rickettsii (strain Iowa).